The primary structure comprises 638 residues: Dihydrolipoyllysine-residue acetyltransferase component of pyruvate dehydrogenase complex (638 aa).

Lipoyl-binding domains lie at 2–74 (SEII…IELE) and 117–191 (SQEV…LTLR). An N6-lipoyllysine modification is found at Lys-40. Residues 90-117 (PAAPTQAVDEAEAPSPGASATPAPAAAS) show a composition bias toward low complexity. The tract at residues 90-119 (PAAPTQAVDEAEAPSPGASATPAPAAASQE) is disordered. Lys-157 is subject to N6-lipoyllysine. A disordered region spans residues 201–220 (APAAAAAASPAPAPLAPAAA). In terms of domain architecture, Lipoyl-binding 3 spans 222–296 (PQEVKVPDIG…GTGDQILTLR (75 aa)). An N6-lipoyllysine modification is found at Lys-262. Residues 301 to 320 (APSGPRARGSPGQAAAAPGA) are compositionally biased toward low complexity. Residues 301–336 (APSGPRARGSPGQAAAAPGAAPAPAPVGAPSRNGAK) form a disordered region. A Peripheral subunit-binding (PSBD) domain is found at 338–375 (HAGPAVRQLAREFGVELAAINSTGPRGRILKEDVQAYV). Positions 382–638 (AKEAPAAGAA…LLADIRAILL (257 aa)) are catalytic. His-611 is a catalytic residue.

It belongs to the 2-oxoacid dehydrogenase family. Forms a 24-polypeptide structural core with octahedral symmetry. The cofactor is (R)-lipoate.

It catalyses the reaction N(6)-[(R)-dihydrolipoyl]-L-lysyl-[protein] + acetyl-CoA = N(6)-[(R)-S(8)-acetyldihydrolipoyl]-L-lysyl-[protein] + CoA. In terms of biological role, the pyruvate dehydrogenase complex catalyzes the overall conversion of pyruvate to acetyl-CoA and CO(2). It contains multiple copies of three enzymatic components: pyruvate dehydrogenase (E1), dihydrolipoamide acetyltransferase (E2) and lipoamide dehydrogenase (E3). The chain is Dihydrolipoyllysine-residue acetyltransferase component of pyruvate dehydrogenase complex from Azotobacter vinelandii.